A 522-amino-acid chain; its full sequence is Cytochrome P450 1A3 (522 aa).

Position 229 (F229) interacts with substrate. Residue C463 participates in heme binding.

The protein belongs to the cytochrome P450 family. It depends on heme as a cofactor. In terms of tissue distribution, liver.

The protein resides in the endoplasmic reticulum membrane. It is found in the microsome membrane. It carries out the reaction an organic molecule + reduced [NADPH--hemoprotein reductase] + O2 = an alcohol + oxidized [NADPH--hemoprotein reductase] + H2O + H(+). Its function is as follows. Cytochromes P450 are a group of heme-thiolate monooxygenases. They oxidize a variety of structurally unrelated compounds, including steroids, fatty acids, and xenobiotics. The chain is Cytochrome P450 1A3 (cyp1a3) from Oncorhynchus mykiss (Rainbow trout).